The primary structure comprises 131 residues: Large ribosomal subunit protein bL12 (131 aa).

The protein belongs to the bacterial ribosomal protein bL12 family. As to quaternary structure, homodimer. Part of the ribosomal stalk of the 50S ribosomal subunit. Forms a multimeric L10(L12)X complex, where L10 forms an elongated spine to which 2 to 4 L12 dimers bind in a sequential fashion. Binds GTP-bound translation factors.

Forms part of the ribosomal stalk which helps the ribosome interact with GTP-bound translation factors. Is thus essential for accurate translation. The sequence is that of Large ribosomal subunit protein bL12 from Nocardioides sp. (strain ATCC BAA-499 / JS614).